The sequence spans 143 residues: Large ribosomal subunit protein uL11 (143 aa).

This sequence belongs to the universal ribosomal protein uL11 family. In terms of assembly, part of the ribosomal stalk of the 50S ribosomal subunit. Interacts with L10 and the large rRNA to form the base of the stalk. L10 forms an elongated spine to which L12 dimers bind in a sequential fashion forming a multimeric L10(L12)X complex. Post-translationally, one or more lysine residues are methylated.

Forms part of the ribosomal stalk which helps the ribosome interact with GTP-bound translation factors. The chain is Large ribosomal subunit protein uL11 from Novosphingobium aromaticivorans (strain ATCC 700278 / DSM 12444 / CCUG 56034 / CIP 105152 / NBRC 16084 / F199).